The sequence spans 444 residues: ATP-dependent 6-phosphofructokinase 2 (444 aa).

Residue Ser55 is modified to Phosphoserine. Residues Gly86, 149–150 (RG), and 174–177 (GDGT) contribute to the ATP site. Residue Asp175 coordinates Mg(2+). Residues 203 to 205 (TVD), 248 to 250 (MGR), Glu304, and 362 to 365 (YMIR) contribute to the substrate site. Asp205 serves as the catalytic Proton acceptor.

Belongs to the phosphofructokinase type A (PFKA) family. PPi-dependent PFK group II subfamily. Atypical ATP-dependent clade 'X' sub-subfamily. Homotetramer. Requires Mg(2+) as cofactor. As to expression, mostly expressed in roots and stems.

It localises to the cytoplasm. It catalyses the reaction beta-D-fructose 6-phosphate + ATP = beta-D-fructose 1,6-bisphosphate + ADP + H(+). The protein operates within carbohydrate degradation; glycolysis; D-glyceraldehyde 3-phosphate and glycerone phosphate from D-glucose: step 3/4. Allosterically activated by AMP. Catalyzes the phosphorylation of D-fructose 6-phosphate to fructose 1,6-bisphosphate by ATP, the first committing step of glycolysis. This chain is ATP-dependent 6-phosphofructokinase 2, found in Arabidopsis thaliana (Mouse-ear cress).